Reading from the N-terminus, the 338-residue chain is MSFEQKPKVTVILANLGTPDEATVPAVRRFLKQFLSDPRVIEIPKFIWWIILNLFVLPFRPKRVAHAYASVWSTDSPMREIVFEQTQRVQAYLERENKQFDLTVLPAMTYGNPGIDAVLEKLATNPQEHVILLPLFPQYSATSTAPLYDAFAKWIPTQRNLPGLTIIKDYYQHPMFIQALAESVLAYQEQHGKPEKLLMSFHGIPQPYADKGDPYADRCRITAKLVAEALHLKDDEWAISFQSRFGKQEWVKPYTDQLLQDWAKQGVKSVQVLSPAFSADCLETLEELAIQNAELFQQAGGGSYAYIPALNSDQAHIDLLAGLVQANLDALTHTLAHR.

The Fe cation site is built by histidine 202 and glutamate 283.

The protein belongs to the ferrochelatase family.

It is found in the cytoplasm. It carries out the reaction heme b + 2 H(+) = protoporphyrin IX + Fe(2+). Its pathway is porphyrin-containing compound metabolism; protoheme biosynthesis; protoheme from protoporphyrin-IX: step 1/1. Functionally, catalyzes the ferrous insertion into protoporphyrin IX. The polypeptide is Ferrochelatase (Acinetobacter baumannii (strain AB307-0294)).